Here is a 77-residue protein sequence, read N- to C-terminus: Serine protease inhibitor 1 (77 aa).

A signal peptide spans 1–17; it reads MMFTPLIVLTLLVLATA. 5 disulfides stabilise this stretch: Cys-21–Cys-53, Cys-30–Cys-48, Cys-33–Cys-44, Cys-37–Cys-74, and Cys-55–Cys-68. The TIL domain occupies 21–74; sequence CGPNEQWSDCPGCELQCGESDKPCPAMCGDPKCYCSPDQYRRIPDGRCIRKIQC.

The protein localises to the secreted. Its function is as follows. Defends the organism against the host's proteinases. This Anisakis simplex (Herring worm) protein is Serine protease inhibitor 1.